A 65-amino-acid chain; its full sequence is Large ribosomal subunit protein bL35 (65 aa).

This sequence belongs to the bacterial ribosomal protein bL35 family.

The sequence is that of Large ribosomal subunit protein bL35 from Methylobacillus flagellatus (strain ATCC 51484 / DSM 6875 / VKM B-1610 / KT).